We begin with the raw amino-acid sequence, 138 residues long: Putative pre-16S rRNA nuclease (138 aa).

The protein belongs to the YqgF nuclease family.

The protein resides in the cytoplasm. In terms of biological role, could be a nuclease involved in processing of the 5'-end of pre-16S rRNA. This is Putative pre-16S rRNA nuclease from Karelsulcia muelleri (strain GWSS) (Sulcia muelleri).